Consider the following 467-residue polypeptide: Glutamine synthetase (467 aa).

The region spanning 14 to 98 (EEVEYVDIRF…VHCNVVEPDT (85 aa)) is the GS beta-grasp domain. The GS catalytic domain occupies 106 to 467 (PRGAAVKAEA…PVEYQMYYSC (362 aa)). Residues glutamate 131 and glutamate 133 each coordinate Mg(2+). Aspartate 209 provides a ligand contact to ATP. Positions 214 and 221 each coordinate Mg(2+). L-glutamate is bound by residues 265 to 266 (NG) and glycine 266. Histidine 270 contacts Mg(2+). ATP is bound by residues 272–274 (NMS) and serine 274. L-glutamate contacts are provided by arginine 320, glutamate 326, and arginine 338. ATP-binding residues include arginine 338 and arginine 343. Glutamate 356 contributes to the Mg(2+) binding site. Residue arginine 358 coordinates L-glutamate. Tyrosine 396 is modified (O-AMP-tyrosine).

It belongs to the glutamine synthetase family. Oligomer of 12 subunits arranged in the form of two hexameric ring. Requires Mg(2+) as cofactor.

It is found in the cytoplasm. The enzyme catalyses L-glutamate + NH4(+) + ATP = L-glutamine + ADP + phosphate + H(+). The activity of this enzyme could be controlled by adenylation under conditions of abundant glutamine. In terms of biological role, catalyzes the ATP-dependent biosynthesis of glutamine from glutamate and ammonia. This Cereibacter sphaeroides (Rhodobacter sphaeroides) protein is Glutamine synthetase.